The primary structure comprises 55 residues: Large ribosomal subunit protein bL33 (55 aa).

It belongs to the bacterial ribosomal protein bL33 family.

This Proteus mirabilis (strain HI4320) protein is Large ribosomal subunit protein bL33.